The chain runs to 285 residues: Nucleotide-binding protein PSPPH_4154 (285 aa).

8-15 (GRSGSGKS) lines the ATP pocket. Position 60–63 (60–63 (DARN)) interacts with GTP.

It belongs to the RapZ-like family.

Displays ATPase and GTPase activities. The protein is Nucleotide-binding protein PSPPH_4154 of Pseudomonas savastanoi pv. phaseolicola (strain 1448A / Race 6) (Pseudomonas syringae pv. phaseolicola (strain 1448A / Race 6)).